Consider the following 503-residue polypeptide: Zinc finger protein JACKDAW (503 aa).

Residues 32 to 51 (IPDLNPNSNPNPNAKPNSSS) are compositionally biased toward low complexity. The tract at residues 32–68 (IPDLNPNSNPNPNAKPNSSSAKKKRNQPGTPDPDADV) is disordered. Position 72 is a phosphoserine (Ser72). C2H2-type zinc fingers lie at residues 82–104 (FVCE…RRGH) and 124–154 (YICP…SRKH). 2 consecutive short sequence motifs (nuclear localization signal) follow at residues 100–107 (HRRGHNLP) and 146–153 (IKKHYSRK). The C2H2-type 2; degenerate zinc finger occupies 159 to 182 (WKCEKCSKKYAVQSDWKAHAKTCG). Zn(2+)-binding residues include Cys161, Cys164, His177, Cys181, Cys188, Cys190, His203, and Cys207. The CCHC-type 2; atypical zinc-finger motif lies at 186-209 (YKCDCGTLFSRKDSFITHRAFCDA). An SHR-binding region spans residues 196 to 208 (RKDSFITHRAFCD). Disordered regions lie at residues 301–417 (SSSS…SSPM) and 432–465 (RENH…LNPA). Residues 319–358 (TSTNPSLTLSSSSTSQQTSASLQHQTLKDSSFSPLFSSSS) are compositionally biased toward low complexity. Residues 381–392 (MGSTRSNSSTAP) are compositionally biased toward polar residues. Residues 396–407 (AGPTMTSSSATA) show a composition bias toward low complexity. The span at 444–465 (GVSTSSVDNNPFQSNRSGLNPA) shows a compositional bias: polar residues.

Interacts with SHR, SCR, MGP and itself. The heterodimer with SHR involves its zinc fingers. Interacts with SIEL. Binds to RGA and SCL3 competitively in the nucleus. Expressed in the quiescent center, the ground tissue stem cells and to a lesser extent in mature cortex and endodermis cells.

The protein localises to the nucleus. Transcription factor that, together with BIB, regulates tissue boundaries and asymmetric cell division by a rapid up-regulation of 'SCARECROW' (SCR), thus controlling the nuclear localization of 'SHORT-ROOT' (SHR) and restricting its action. Binds DNA via its zinc fingers. Recognizes and binds to SCL3 promoter sequence 5'-AGACAA-3' to promote its expression when in complex with RGA. Confines CYCD6 expression to the cortex-endodermis initial/daughter (CEI/CEID) tissues. Required for radial patterning and stem cell maintenance. Counteracted by 'MAGPIE' (MGP). Binds to the SCR and MGP promoter sequences. Controls position-dependent signals that regulate epidermal-cell-type patterning. This chain is Zinc finger protein JACKDAW, found in Arabidopsis thaliana (Mouse-ear cress).